The sequence spans 206 residues: Uridine kinase (206 aa).

An ATP-binding site is contributed by 9-16 (GGSGSGKT).

This sequence belongs to the uridine kinase family. Monomer.

It is found in the cytoplasm. It carries out the reaction uridine + ATP = UMP + ADP + H(+). The catalysed reaction is cytidine + ATP = CMP + ADP + H(+). Its pathway is pyrimidine metabolism; CTP biosynthesis via salvage pathway; CTP from cytidine: step 1/3. The protein operates within pyrimidine metabolism; UMP biosynthesis via salvage pathway; UMP from uridine: step 1/1. The protein is Uridine kinase (udk) of Borreliella burgdorferi (strain ATCC 35210 / DSM 4680 / CIP 102532 / B31) (Borrelia burgdorferi).